The chain runs to 407 residues: Na(+)-translocating NADH-quinone reductase subunit F (407 aa).

A helical transmembrane segment spans residues 3 to 23 (ITLGIAMFTVIVLALAVLILF). The 2Fe-2S ferredoxin-type domain occupies 32–126 (GDITIEINDD…SMKIELPEEV (95 aa)). [2Fe-2S] cluster contacts are provided by Cys69, Cys75, Cys78, and Cys110. One can recognise an FAD-binding FR-type domain in the interval 129-269 (VKKWECTVIS…SGPFGEFFAK (141 aa)).

It belongs to the NqrF family. As to quaternary structure, composed of six subunits; NqrA, NqrB, NqrC, NqrD, NqrE and NqrF. [2Fe-2S] cluster is required as a cofactor. FAD serves as cofactor.

The protein localises to the cell inner membrane. The catalysed reaction is a ubiquinone + n Na(+)(in) + NADH + H(+) = a ubiquinol + n Na(+)(out) + NAD(+). NQR complex catalyzes the reduction of ubiquinone-1 to ubiquinol by two successive reactions, coupled with the transport of Na(+) ions from the cytoplasm to the periplasm. The first step is catalyzed by NqrF, which accepts electrons from NADH and reduces ubiquinone-1 to ubisemiquinone by a one-electron transfer pathway. This Histophilus somni (strain 129Pt) (Haemophilus somnus) protein is Na(+)-translocating NADH-quinone reductase subunit F.